Reading from the N-terminus, the 110-residue chain is MSKAIIKFVRLSPTKARLIAREVQGMNAELALASLQFMPNRGAKFIANAISSAVANGGFEPEEVVVSSCRVDAGPVLKRFRPRARGTASKIRKPTSHVMVEVSKAQKKEA.

Over residues 85-95 (RGTASKIRKPT) the composition is skewed to basic residues. A disordered region spans residues 85–110 (RGTASKIRKPTSHVMVEVSKAQKKEA).

The protein belongs to the universal ribosomal protein uL22 family. In terms of assembly, part of the 50S ribosomal subunit.

This protein binds specifically to 23S rRNA; its binding is stimulated by other ribosomal proteins, e.g. L4, L17, and L20. It is important during the early stages of 50S assembly. It makes multiple contacts with different domains of the 23S rRNA in the assembled 50S subunit and ribosome. Functionally, the globular domain of the protein is located near the polypeptide exit tunnel on the outside of the subunit, while an extended beta-hairpin is found that lines the wall of the exit tunnel in the center of the 70S ribosome. The chain is Large ribosomal subunit protein uL22 from Campylobacter curvus (strain 525.92).